Consider the following 414-residue polypeptide: MSEQSICQARASVMVYDDTSKKWVPIKPGQQGFSRINIYHNTASSTFRVVGVKLQDQQVVINYSIVKGLKYNQATPTFHQWRDARQVYGLNFASKEEATTFSNAMLFALNIMNSQEGGPSTQRQVQNGPSPEEMDIQRRQVMEQQHRQESLERRISATGPILPPGHPSSAASTTLSCSGPPPPPPPPVPPPPTGSTPPPPPPLPAGGAQGTNHDESSASGLAAALAGAKLRRVQRPEDASGGSSPSGTSKSDANRASSGGGGGGLMEEMNKLLAKRRKAASQTDKPADRKEDESQTEDPSTSPSPGTRATSQPPNSSEAGRKPWERSNSVEKPVSSLLSRTPSVAKSPEAKSPLQSQPHSRVKPAGSVNDVGLDALDLDRMKQEILEEVVRELHKVKEEIIDAIRQELSGISTT.

The 112-residue stretch at 1 to 112 (MSEQSICQAR…NAMLFALNIM (112 aa)) folds into the WH1 domain. Position 130 is a phosphoserine (serine 130). A disordered region spans residues 157–369 (ATGPILPPGH…SRVKPAGSVN (213 aa)). The span at 179–204 (GPPPPPPPPVPPPPTGSTPPPPPPLP) shows a compositional bias: pro residues. The span at 217–228 (SASGLAAALAGA) shows a compositional bias: low complexity. Residues 220–240 (GLAAALAGAKLRRVQRPEDAS) are EVH2 block A. Residues 220–411 (GLAAALAGAK…DAIRQELSGI (192 aa)) form an EVH2 region. Positions 229 to 232 (KLRR) match the KLKR motif. A compositionally biased stretch (low complexity) spans 240–251 (SGGSSPSGTSKS). Residues serine 244 and serine 257 each carry the phosphoserine modification. The tract at residues 263-280 (GGLMEEMNKLLAKRRKAA) is EVH2 block B. Over residues 297 to 318 (EDPSTSPSPGTRATSQPPNSSE) the composition is skewed to polar residues. Phosphoserine is present on residues serine 302, serine 304, serine 327, serine 329, serine 339, serine 347, serine 352, and serine 367. Residues 319–329 (AGRKPWERSNS) show a composition bias toward basic and acidic residues. Residues 340 to 360 (RTPSVAKSPEAKSPLQSQPHS) are required for interaction with ZDHHC17. The tract at residues 377 to 411 (DLDRMKQEILEEVVRELHKVKEEIIDAIRQELSGI) is EVH2 block C.

It belongs to the Ena/VASP family. Homotetramer. Binds to the SH3 domains of ABL1, LYN and SRC. Also binds to profilin, with preference for isoform IIa of PFN2, and the WW domain of APBB1/FE65. Binds to SEMA6A. Interacts, via the Pro-rich region, with the C-terminal SH3 domain of DNMBP. Interacts with RAPH1. Binds, via the EVH1 domain, the Pro-rich domain of Listeria monocytogenes actA. Binds, via the EVH1 domain, the Pro-rich domain of ZYX. Interacts with FYB1. Interacts with ZDHHC17. Phosphorylated by PKA; phosphorylation abolishes binding to SH3 domains of ABL and SRC. In terms of tissue distribution, highest expression in thymus and spleen (at protein level). Low levels in placenta, ovary, testis, fat and lung (at protein level). Isoform 1 and isoform 2 are expressed in cortical neurons and glial cells.

It is found in the cytoplasm. The protein localises to the cytoskeleton. Its subcellular location is the stress fiber. The protein resides in the cell projection. It localises to the lamellipodium. Ena/VASP proteins are actin-associated proteins involved in a range of processes dependent on cytoskeleton remodeling and cell polarity such as axon guidance and lamellipodial and filopodial dynamics in migrating cells. EVL enhances actin nucleation and polymerization. This chain is Ena/VASP-like protein (Evl), found in Mus musculus (Mouse).